A 311-amino-acid chain; its full sequence is Malate dehydrogenase (311 aa).

Residues 7–13 (GAAGGIG) and D34 each bind NAD(+). The substrate site is built by R81 and R87. NAD(+)-binding positions include N94 and 117–119 (ITN). Residues N119 and R153 each contribute to the substrate site. The Proton acceptor role is filled by H177. M227 is a binding site for NAD(+).

The protein belongs to the LDH/MDH superfamily. MDH type 1 family. As to quaternary structure, homodimer.

The enzyme catalyses (S)-malate + NAD(+) = oxaloacetate + NADH + H(+). Functionally, catalyzes the reversible oxidation of malate to oxaloacetate. This Colwellia psychrerythraea (strain 34H / ATCC BAA-681) (Vibrio psychroerythus) protein is Malate dehydrogenase.